The primary structure comprises 634 residues: Sodium-dependent neutral amino acid transporter B(0)AT1 (634 aa).

The Cytoplasmic portion of the chain corresponds to 1–41 (MVRLVLPNPGLEDRIPSLDELEVIEKEEASSRPKWDNKAQY). Ser17 bears the Phosphoserine mark. A helical membrane pass occupies residues 42–62 (MLTCVGFCVGLGNVWRFPYLC). The Extracellular portion of the chain corresponds to 63 to 65 (QSH). The chain crosses the membrane as a helical span at residues 66 to 86 (GGGAFMIPFLILLVLEGIPLL). At 87-119 (HLEFAIGQRLRKGSVGVWSSIHPALKGVGIASM) the chain is on the cytoplasmic side. The chain crosses the membrane as a helical span at residues 120 to 140 (FVSFMVGLYYNTIIAWVMWYF). The Extracellular portion of the chain corresponds to 141 to 192 (FNSFQEPLPWSECPLNQNQTGYVEECAKSSSVDYFWYRETLNISTSISDSGS). Asn158 and Asn182 each carry an N-linked (GlcNAc...) asparagine glycan. A helical membrane pass occupies residues 193–213 (IQWWILLCLTCAWSVLYVCTI). At 214–221 (RGIETTGK) the chain is on the cytoplasmic side. Residues 222-242 (AVYITSTLPYVVLTIFLIRGL) form a helical membrane-spanning segment. Over 243-268 (TLKGATNGIVFLFTPNITELSNPNTW) the chain is Extracellular. N-linked (GlcNAc...) asparagine glycosylation occurs at Asn258. A helical transmembrane segment spans residues 269-289 (LDAGAQVFYSFSLAFGGLISF). Over 290–304 (SSYNSVHNNCEMDSV) the chain is Cytoplasmic. A helical transmembrane segment spans residues 305-325 (IVSIINGFTSVYAATVVYSII). The Extracellular segment spans residues 326–413 (GFRATERFDD…TEAITKMPVS (88 aa)). Residues Asn354 and Asn368 are each glycosylated (N-linked (GlcNAc...) asparagine). A helical transmembrane segment spans residues 414–434 (PLWSVLFFIMLFCLGLSSMFG). Topologically, residues 435 to 456 (NMEGVVVPLQDLNITPKKWPKE) are cytoplasmic. The helical transmembrane segment at 457–477 (LLTGLICLGTYLIAFIFTLNS) threads the bilayer. The Extracellular portion of the chain corresponds to 478 to 490 (GQYWLSLLDSYAG). A helical transmembrane segment spans residues 491-511 (SIPLLIIAFCEMFAVVYVYGV). The Cytoplasmic segment spans residues 512–531 (DRFNKDIEFMIGHKPNIFWQ). A helical transmembrane segment spans residues 532 to 552 (VTWRVVSPLIMLVIFLFFFVI). Residues 553-581 (EVNKQLMYSVWDPDYEEFPKSQKVPYPDW) are Extracellular-facing. The chain crosses the membrane as a helical span at residues 582–602 (VYAVVVIVAGVPCLTIPCFAI). Topologically, residues 603–634 (YKLIRNYCQKSGDQHGLVNALSTASVNGDLKN) are cytoplasmic. At Ser627 the chain carries Phosphoserine.

Belongs to the sodium:neurotransmitter symporter (SNF) (TC 2.A.22) family. SLC6A19 subfamily. Interacts in a tissue-specific manner with ACE2 in small intestine and with CLTRN in the kidney. Interacts with CLTRN; this interaction is required for trafficking of SLC6A19 to the plasma membrane and for its catalytic activation in kidneys. Interacts with ACE2; this interaction is required for trafficking of SLC6A19 to the plasma membrane and for its catalytic activation in intestine. Interacts with ANPEP; the interaction positively regulates its amino acid transporter activity.

It localises to the membrane. It catalyses the reaction L-alanine(in) + Na(+)(in) = L-alanine(out) + Na(+)(out). It carries out the reaction L-cysteine(in) + Na(+)(in) = L-cysteine(out) + Na(+)(out). The enzyme catalyses L-glutamine(in) + Na(+)(in) = L-glutamine(out) + Na(+)(out). The catalysed reaction is glycine(in) + Na(+)(in) = glycine(out) + Na(+)(out). It catalyses the reaction L-isoleucine(in) + Na(+)(in) = L-isoleucine(out) + Na(+)(out). It carries out the reaction L-leucine(in) + Na(+)(in) = L-leucine(out) + Na(+)(out). The enzyme catalyses L-methionine(in) + Na(+)(in) = L-methionine(out) + Na(+)(out). The catalysed reaction is L-phenylalanine(in) + Na(+)(in) = L-phenylalanine(out) + Na(+)(out). It catalyses the reaction L-serine(in) + Na(+)(in) = L-serine(out) + Na(+)(out). It carries out the reaction L-tryptophan(in) + Na(+)(in) = L-tryptophan(out) + Na(+)(out). The enzyme catalyses L-tyrosine(in) + Na(+)(in) = L-tyrosine(out) + Na(+)(out). The catalysed reaction is L-valine(in) + Na(+)(in) = L-valine(out) + Na(+)(out). Transporter that mediates resorption of neutral amino acids across the apical membrane of renal and intestinal epithelial cells. This uptake is sodium-dependent and chloride-independent. Requires CLTRN in kidney or ACE2 in intestine for cell surface expression and amino acid transporter activity. This chain is Sodium-dependent neutral amino acid transporter B(0)AT1, found in Rattus norvegicus (Rat).